We begin with the raw amino-acid sequence, 210 residues long: Putative Dihydrofolate reductase (210 aa).

A DHFR domain is found at 4 to 184 (TLYCVVAVDT…IFYMFETYIK (181 aa)).

The protein belongs to the dihydrofolate reductase family.

It carries out the reaction (6S)-5,6,7,8-tetrahydrofolate + NADP(+) = 7,8-dihydrofolate + NADPH + H(+). The protein is Putative Dihydrofolate reductase (ORF2) of Human herpesvirus 8 type P (isolate GK18) (HHV-8).